Reading from the N-terminus, the 251-residue chain is Haloacid dehalogenase-like hydrolase domain-containing protein 3 (251 aa).

Lysine 15 carries the post-translational modification N6-acetyllysine; alternate. An N6-succinyllysine; alternate modification is found at lysine 15.

Belongs to the HAD-like hydrolase superfamily.

The polypeptide is Haloacid dehalogenase-like hydrolase domain-containing protein 3 (HDHD3) (Homo sapiens (Human)).